The primary structure comprises 478 residues: BTB/POZ domain-containing protein 17 (478 aa).

Residues 1-28 (MLRKGSCKPGSWGSFWAILALVGLVTRA) form the signal peptide. 4 N-linked (GlcNAc...) asparagine glycosylation sites follow: Asn-61, Asn-100, Asn-195, and Asn-307. The region spanning 63 to 132 (SDVILRVQAV…LYCGELTVLL (70 aa)) is the BTB domain. The 101-residue stretch at 169 to 269 (AVGWYHYAVS…IPPAQLFQLQ (101 aa)) folds into the BACK domain.

The protein localises to the secreted. The chain is BTB/POZ domain-containing protein 17 (Btbd17) from Mus musculus (Mouse).